A 350-amino-acid polypeptide reads, in one-letter code: S-adenosylmethionine:tRNA ribosyltransferase-isomerase (350 aa).

Belongs to the QueA family. Monomer.

The protein localises to the cytoplasm. It carries out the reaction 7-aminomethyl-7-carbaguanosine(34) in tRNA + S-adenosyl-L-methionine = epoxyqueuosine(34) in tRNA + adenine + L-methionine + 2 H(+). It participates in tRNA modification; tRNA-queuosine biosynthesis. Its function is as follows. Transfers and isomerizes the ribose moiety from AdoMet to the 7-aminomethyl group of 7-deazaguanine (preQ1-tRNA) to give epoxyqueuosine (oQ-tRNA). The sequence is that of S-adenosylmethionine:tRNA ribosyltransferase-isomerase from Vibrio parahaemolyticus serotype O3:K6 (strain RIMD 2210633).